An 83-amino-acid polypeptide reads, in one-letter code: Small ribosomal subunit protein uS17 (83 aa).

It belongs to the universal ribosomal protein uS17 family. As to quaternary structure, part of the 30S ribosomal subunit.

One of the primary rRNA binding proteins, it binds specifically to the 5'-end of 16S ribosomal RNA. In Magnetococcus marinus (strain ATCC BAA-1437 / JCM 17883 / MC-1), this protein is Small ribosomal subunit protein uS17.